Consider the following 221-residue polypeptide: Leucine rich adaptor protein 1-like (221 aa).

Methionine 1 is subject to N-acetylmethionine. Residues 1 to 81 (MEDGPLPDLR…SGSPRRSHPS (81 aa)) form a disordered region. Basic and acidic residues-rich tracts occupy residues 8–21 (DLRDIELKLGRKVP) and 28–39 (LRGEEPAPREGA). Low complexity predominate over residues 48–75 (SCSSSSSCSSFAPSVSSSSSSSPASGSP).

The protein is Leucine rich adaptor protein 1-like (Lurap1l) of Rattus norvegicus (Rat).